A 270-amino-acid polypeptide reads, in one-letter code: Putative phosphoenolpyruvate synthase regulatory protein (270 aa).

150-157 (GVSRCGKT) lines the ADP pocket.

It belongs to the pyruvate, phosphate/water dikinase regulatory protein family. PSRP subfamily.

The catalysed reaction is [pyruvate, water dikinase] + ADP = [pyruvate, water dikinase]-phosphate + AMP + H(+). It catalyses the reaction [pyruvate, water dikinase]-phosphate + phosphate + H(+) = [pyruvate, water dikinase] + diphosphate. Its function is as follows. Bifunctional serine/threonine kinase and phosphorylase involved in the regulation of the phosphoenolpyruvate synthase (PEPS) by catalyzing its phosphorylation/dephosphorylation. This chain is Putative phosphoenolpyruvate synthase regulatory protein, found in Shewanella loihica (strain ATCC BAA-1088 / PV-4).